A 921-amino-acid polypeptide reads, in one-letter code: Extended synaptotagmin-2 (921 aa).

Residues 1-103 (MTANRDAALS…RPGGPENPGG (103 aa)) lie on the Cytoplasmic side of the membrane. The interval 1–103 (MTANRDAALS…RPGGPENPGG (103 aa)) is disordered. Residues 58–75 (GARRRAKTARGLRGHRQR) show a composition bias toward basic residues. A helical transmembrane segment spans residues 104-124 (VLSVELPGLLAQLARSFALLL). Residues 125 to 127 (PVY) are Lumenal-facing. A helical transmembrane segment spans residues 128 to 148 (ALGYLGLSFSWVLLALALLAW). The Cytoplasmic portion of the chain corresponds to 149 to 921 (CRRSRGLKAL…EDGTRPQAMT (773 aa)). The SMP-LTD domain occupies 191 to 370 (DTERAEWLNK…LPNRITVPLV (180 aa)). C2 domains lie at 369–489 (LVSE…DEWF) and 514–639 (NLDK…QLSN). Positions 400, 401, 413, 460, 461, 462, 464, 466, and 467 each coordinate Ca(2+). A disordered region spans residues 660-754 (RERPPDHQHS…GHISVKEPTP (95 aa)). Residues S691 and S693 each carry the phosphoserine modification. T705 bears the Phosphothreonine mark. A phosphoserine mark is found at S736, S738, S739, S743, S748, S755, S758, and S761. A C2 3 domain is found at 786 to 908 (PLGQIQLTIR…ELAKGWTQWY (123 aa)). Residues 833–840 (KRRSGRRK) are required for phosphatidylinositol 4,5-bisphosphate-dependent location at the cell membrane.

Belongs to the extended synaptotagmin family. In terms of assembly, homodimer. Interacts with ESYT1 and ESYT3. Interacts with FGFR1 that has been activated by FGF1 binding. Interacts with the AP-2 complex; identified in a complex with the AP-2 complex and FGFR1. As to expression, widely expressed with high level in cerebellum.

Its subcellular location is the cell membrane. It is found in the endoplasmic reticulum membrane. Functionally, tethers the endoplasmic reticulum to the cell membrane and promotes the formation of appositions between the endoplasmic reticulum and the cell membrane. Binds glycerophospholipids in a barrel-like domain and may play a role in cellular lipid transport. Plays a role in FGF signaling via its role in the rapid internalization of FGFR1 that has been activated by FGF1 binding; this occurs most likely via the AP-2 complex. Promotes the localization of SACM1L at endoplasmic reticulum-plasma membrane contact sites (EPCS). The protein is Extended synaptotagmin-2 of Homo sapiens (Human).